Consider the following 240-residue polypeptide: 1-(5-phosphoribosyl)-5-[(5-phosphoribosylamino)methylideneamino] imidazole-4-carboxamide isomerase 2 (240 aa).

The Proton acceptor role is filled by Asp8. Residue Asp129 is the Proton donor of the active site.

The protein belongs to the HisA/HisF family.

It localises to the cytoplasm. It carries out the reaction 1-(5-phospho-beta-D-ribosyl)-5-[(5-phospho-beta-D-ribosylamino)methylideneamino]imidazole-4-carboxamide = 5-[(5-phospho-1-deoxy-D-ribulos-1-ylimino)methylamino]-1-(5-phospho-beta-D-ribosyl)imidazole-4-carboxamide. The protein operates within amino-acid biosynthesis; L-histidine biosynthesis; L-histidine from 5-phospho-alpha-D-ribose 1-diphosphate: step 4/9. The protein is 1-(5-phosphoribosyl)-5-[(5-phosphoribosylamino)methylideneamino] imidazole-4-carboxamide isomerase 2 of Ruegeria sp. (strain TM1040) (Silicibacter sp.).